Here is a 237-residue protein sequence, read N- to C-terminus: tRNA (guanine-N(7)-)-methyltransferase (237 aa).

S-adenosyl-L-methionine is bound by residues Glu-67, Glu-92, Asp-119, and Asp-142. The active site involves Asp-142. Substrate is bound by residues Lys-146, Asp-178, and 215 to 218 (TKFE).

The protein belongs to the class I-like SAM-binding methyltransferase superfamily. TrmB family.

The catalysed reaction is guanosine(46) in tRNA + S-adenosyl-L-methionine = N(7)-methylguanosine(46) in tRNA + S-adenosyl-L-homocysteine. It participates in tRNA modification; N(7)-methylguanine-tRNA biosynthesis. Functionally, catalyzes the formation of N(7)-methylguanine at position 46 (m7G46) in tRNA. The polypeptide is tRNA (guanine-N(7)-)-methyltransferase (Aeromonas hydrophila subsp. hydrophila (strain ATCC 7966 / DSM 30187 / BCRC 13018 / CCUG 14551 / JCM 1027 / KCTC 2358 / NCIMB 9240 / NCTC 8049)).